We begin with the raw amino-acid sequence, 193 residues long: Potassium-transporting ATPase KdpC subunit (193 aa).

Residues 7–27 (PMIVIFAVLAALTGLAYPAVM) traverse the membrane as a helical segment.

It belongs to the KdpC family. The system is composed of three essential subunits: KdpA, KdpB and KdpC.

It localises to the cell inner membrane. In terms of biological role, part of the high-affinity ATP-driven potassium transport (or Kdp) system, which catalyzes the hydrolysis of ATP coupled with the electrogenic transport of potassium into the cytoplasm. This subunit acts as a catalytic chaperone that increases the ATP-binding affinity of the ATP-hydrolyzing subunit KdpB by the formation of a transient KdpB/KdpC/ATP ternary complex. This chain is Potassium-transporting ATPase KdpC subunit, found in Paraburkholderia phymatum (strain DSM 17167 / CIP 108236 / LMG 21445 / STM815) (Burkholderia phymatum).